Consider the following 186-residue polypeptide: ADP compounds hydrolase NudE (186 aa).

E40 is a binding site for substrate. Residues 45 to 172 (TNREAVMIVP…DFNEARNVSA (128 aa)) form the Nudix hydrolase domain. Residues 80–101 (GLIDPGESVYEAANRELKEEVG) carry the Nudix box motif. Positions 95 and 99 each coordinate a divalent metal cation. S118 provides a ligand contact to substrate.

It belongs to the Nudix hydrolase family. Homodimer. Mg(2+) serves as cofactor.

The catalysed reaction is ADP-D-ribose + H2O = D-ribose 5-phosphate + AMP + 2 H(+). Its function is as follows. Active on adenosine(5')triphospho(5')adenosine (Ap3A), ADP-ribose, NADH, adenosine(5')diphospho(5')adenosine (Ap2A). The chain is ADP compounds hydrolase NudE (nudE) from Escherichia coli (strain K12).